Reading from the N-terminus, the 1412-residue chain is Protein MODIFIER OF SNC1 1 (1412 aa).

Disordered stretches follow at residues 1–276, 384–437, 472–798, 827–888, 909–1144, and 1156–1412; these read MTSS…QSYP, GYGS…TQRP, QQMQ…KQKQ, NEGV…DESI, DIKV…WNDG, and AEEM…GDRN. The span at 56–103 shows a compositional bias: polar residues; the sequence is SWGSKSSLNAWGTSSLSPRTESGPGSPSHLSNRPSSGGSVTRPSTADS. Ser72 carries the post-translational modification Phosphoserine. The segment covering 109–119 has biased composition (low complexity); sequence SSSSVAWDSNS. The span at 120–135 shows a compositional bias: polar residues; that stretch reads RPSSASGVFPSNQPSV. 2 stretches are compositionally biased toward basic and acidic residues: residues 197 to 207 and 236 to 267; these read AEKDTSEKSTR and ANDR…EGQL. Over residues 478-488 the composition is skewed to basic and acidic residues; that stretch reads RNERREIRNDA. Composition is skewed to polar residues over residues 517 to 531, 539 to 553, 565 to 581, and 610 to 639; these read KTRT…SSVV, QPRT…NKVS, SKNS…TNKN, and RIVN…TNTE. Residues 665–713 are compositionally biased toward basic and acidic residues; it reads DPKDNQRSTMRELARQRAQQRQKEEEERARDQRAKALAKLEELNRRSQI. Residues 667 to 717 are a coiled coil; it reads KDNQRSTMRELARQRAQQRQKEEEERARDQRAKALAKLEELNRRSQIYEEG. 3 stretches are compositionally biased toward polar residues: residues 738–749, 756–779, and 829–847; these read GSHSSNATNSVE, KNTT…QQDN, and GVSS…SAES. The segment covering 850–862 has biased composition (basic residues); sequence PKRKNNRNGKKKH. The span at 877 to 888 shows a compositional bias: basic and acidic residues; that stretch reads VGKETKSGDESI. Ser883 carries the post-translational modification Phosphoserine. Polar residues-rich tracts occupy residues 914–938 and 983–1003; these read GDSS…NWKS and QTTV…QTSS. Basic and acidic residues predominate over residues 1006–1023; the sequence is KRVEIERYVPKPIVKEMA. Residues 1056-1070 show a composition bias toward polar residues; sequence LQPSGSTAGKSGSPS. Positions 1071–1084 are enriched in basic residues; the sequence is KSRHGNGRQGKHGR. Polar residues predominate over residues 1106–1137; it reads FVTSNQPIRGTVNYHSSKQTEQIAAKDQTTCN. 3 stretches are compositionally biased toward basic and acidic residues: residues 1191–1202, 1222–1232, and 1242–1251; these read DPKKGNKRDFNK, KEGRVPGDHVW, and GGRESTRDKP. 2 stretches are compositionally biased toward polar residues: residues 1266–1286 and 1293–1307; these read GFTT…QNRS and VEQN…NTGQ. 2 stretches are compositionally biased toward basic and acidic residues: residues 1338 to 1351 and 1359 to 1369; these read SNRD…HYEY and YDGERSREQSK. Low complexity predominate over residues 1384-1397; that stretch reads QGQQRQGGYQQQRG. Over residues 1400–1412 the composition is skewed to gly residues; it reads GRNGGHGFTGDRN.

As to quaternary structure, interacts with TCP14 and TCP15.

Involved in the regulation of the chromatin structure and DNA methylation at the SNC1 locus. Regulates the expression of SNC1 at chromatin level. The protein is Protein MODIFIER OF SNC1 1 (MOS1) of Arabidopsis thaliana (Mouse-ear cress).